The sequence spans 263 residues: Large ribosomal subunit protein uL23m (263 aa).

Residues M1–L45 constitute a mitochondrion transit peptide.

It belongs to the universal ribosomal protein uL23 family. As to quaternary structure, component of the mitochondrial large ribosomal subunit (mt-LSU). Mature yeast 74S mitochondrial ribosomes consist of a small (37S) and a large (54S) subunit. The 37S small subunit contains a 15S ribosomal RNA (15S mt-rRNA) and 34 different proteins. The 54S large subunit contains a 21S rRNA (21S mt-rRNA) and 46 different proteins. uL23m forms the wall of the exit tunnel. Interacts with the C-terminus of OXA1.

It localises to the mitochondrion. Its function is as follows. Component of the mitochondrial ribosome (mitoribosome), a dedicated translation machinery responsible for the synthesis of mitochondrial genome-encoded proteins, including at least some of the essential transmembrane subunits of the mitochondrial respiratory chain. The mitoribosomes are attached to the mitochondrial inner membrane and translation products are cotranslationally integrated into the membrane. In Saccharomyces cerevisiae (strain ATCC 204508 / S288c) (Baker's yeast), this protein is Large ribosomal subunit protein uL23m (MRP20).